Consider the following 20-residue polypeptide: Ribosome-inactivating protein (20 aa).

The tract at residues 1-20 is disordered; sequence NVRFDLSGATSSSYKTFIKN. Polar residues predominate over residues 8–20; that stretch reads GATSSSYKTFIKN.

The protein belongs to the ribosome-inactivating protein family. Type 1 RIP subfamily.

The catalysed reaction is Endohydrolysis of the N-glycosidic bond at one specific adenosine on the 28S rRNA.. The polypeptide is Ribosome-inactivating protein (Cucurbita pepo (Vegetable marrow)).